Here is a 61-residue protein sequence, read N- to C-terminus: Small ribosomal subunit protein uS14B (61 aa).

4 residues coordinate Zn(2+): Cys-24, Cys-27, Cys-40, and Cys-43.

Belongs to the universal ribosomal protein uS14 family. Zinc-binding uS14 subfamily. Part of the 30S ribosomal subunit. Contacts proteins S3 and S10. Zn(2+) serves as cofactor.

Its function is as follows. Binds 16S rRNA, required for the assembly of 30S particles and may also be responsible for determining the conformation of the 16S rRNA at the A site. The sequence is that of Small ribosomal subunit protein uS14B from Kineococcus radiotolerans (strain ATCC BAA-149 / DSM 14245 / SRS30216).